Reading from the N-terminus, the 365-residue chain is Delta(7)-sterol 5(6)-desaturase ERG3 (365 aa).

Topologically, residues 1 to 92 (MDLVLEVADH…LLPRSSILRE (92 aa)) are cytoplasmic. The helical transmembrane segment at 93-113 (FLSLWVIVTIFGLLLYLFTAS) threads the bilayer. The Lumenal segment spans residues 114-140 (LSYVFVFDKSIFNHPRYLKNQMAMEIK). Residues 141–161 (LAVSAIPWMSMLTVPWFVMEL) form a helical membrane-spanning segment. Residues 162 to 242 (NGHSKLYMKI…VDGFLQSISY (81 aa)) lie on the Cytoplasmic side of the membrane. A Fatty acid hydroxylase domain is found at 187–311 (TFIFFTDCGV…FTTLWDRLGG (125 aa)). The short motif at 200-204 (HRWLH) is the Histidine box-1 element. The Histidine box-2 motif lies at 213–217 (HKPHH). The helical transmembrane segment at 243–263 (HIYPLILPLHKVSYLILFTFV) threads the bilayer. The Lumenal segment spans residues 264-365 (NFWTVMIHDG…ENDPNTKKNN (102 aa)). The Histidine box-3 signature appears at 288–292 (HTVHH). Glycyl lysine isopeptide (Lys-Gly) (interchain with G-Cter in ubiquitin) cross-links involve residues Lys324 and Lys344.

It belongs to the sterol desaturase family. In terms of assembly, interacts with ERG28. Requires Fe cation as cofactor.

It is found in the endoplasmic reticulum membrane. It carries out the reaction episterol + 2 Fe(II)-[cytochrome b5] + O2 + 2 H(+) = 5-dehydroepisterol + 2 Fe(III)-[cytochrome b5] + 2 H2O. The protein operates within steroid metabolism; ergosterol biosynthesis; ergosterol from zymosterol: step 3/5. C-5 sterol desaturase; part of the third module of ergosterol biosynthesis pathway that includes the late steps of the pathway. ERG3 catalyzes the introduction of a C-5 double bond in the B ring to produce 5-dehydroepisterol. The third module or late pathway involves the ergosterol synthesis itself through consecutive reactions that mainly occur in the endoplasmic reticulum (ER) membrane. Firstly, the squalene synthase ERG9 catalyzes the condensation of 2 farnesyl pyrophosphate moieties to form squalene, which is the precursor of all steroids. Squalene synthase is crucial for balancing the incorporation of farnesyl diphosphate (FPP) into sterol and nonsterol isoprene synthesis. Secondly, the squalene epoxidase ERG1 catalyzes the stereospecific oxidation of squalene to (S)-2,3-epoxysqualene, which is considered to be a rate-limiting enzyme in steroid biosynthesis. Then, the lanosterol synthase ERG7 catalyzes the cyclization of (S)-2,3 oxidosqualene to lanosterol, a reaction that forms the sterol core. In the next steps, lanosterol is transformed to zymosterol through a complex process involving various demethylation, reduction and desaturation reactions. The lanosterol 14-alpha-demethylase ERG11 (also known as CYP51) catalyzes C14-demethylation of lanosterol to produce 4,4'-dimethyl cholesta-8,14,24-triene-3-beta-ol, which is critical for ergosterol biosynthesis. The C-14 reductase ERG24 reduces the C14=C15 double bond of 4,4-dimethyl-cholesta-8,14,24-trienol to produce 4,4-dimethyl-cholesta-8,24-dienol. 4,4-dimethyl-cholesta-8,24-dienol is substrate of the C-4 demethylation complex ERG25-ERG26-ERG27 in which ERG25 catalyzes the three-step monooxygenation required for the demethylation of 4,4-dimethyl and 4alpha-methylsterols, ERG26 catalyzes the oxidative decarboxylation that results in a reduction of the 3-beta-hydroxy group at the C-3 carbon to an oxo group, and ERG27 is responsible for the reduction of the keto group on the C-3. ERG28 has a role as a scaffold to help anchor ERG25, ERG26 and ERG27 to the endoplasmic reticulum and ERG29 regulates the activity of the iron-containing C4-methylsterol oxidase ERG25. Then, the sterol 24-C-methyltransferase ERG6 catalyzes the methyl transfer from S-adenosyl-methionine to the C-24 of zymosterol to form fecosterol. The C-8 sterol isomerase ERG2 catalyzes the reaction which results in unsaturation at C-7 in the B ring of sterols and thus converts fecosterol to episterol. The sterol-C5-desaturase ERG3 then catalyzes the introduction of a C-5 double bond in the B ring to produce 5-dehydroepisterol. The C-22 sterol desaturase ERG5 further converts 5-dehydroepisterol into ergosta-5,7,22,24(28)-tetraen-3beta-ol by forming the C-22(23) double bond in the sterol side chain. Finally, ergosta-5,7,22,24(28)-tetraen-3beta-ol is substrate of the C-24(28) sterol reductase ERG4 to produce ergosterol. The sequence is that of Delta(7)-sterol 5(6)-desaturase ERG3 from Saccharomyces cerevisiae (strain ATCC 204508 / S288c) (Baker's yeast).